The chain runs to 949 residues: Glycine dehydrogenase (decarboxylating) (949 aa).

Lys704 is subject to N6-(pyridoxal phosphate)lysine.

This sequence belongs to the GcvP family. The glycine cleavage system is composed of four proteins: P, T, L and H. It depends on pyridoxal 5'-phosphate as a cofactor.

The catalysed reaction is N(6)-[(R)-lipoyl]-L-lysyl-[glycine-cleavage complex H protein] + glycine + H(+) = N(6)-[(R)-S(8)-aminomethyldihydrolipoyl]-L-lysyl-[glycine-cleavage complex H protein] + CO2. Functionally, the glycine cleavage system catalyzes the degradation of glycine. The P protein binds the alpha-amino group of glycine through its pyridoxal phosphate cofactor; CO(2) is released and the remaining methylamine moiety is then transferred to the lipoamide cofactor of the H protein. The chain is Glycine dehydrogenase (decarboxylating) from Bacteroides thetaiotaomicron (strain ATCC 29148 / DSM 2079 / JCM 5827 / CCUG 10774 / NCTC 10582 / VPI-5482 / E50).